A 130-amino-acid polypeptide reads, in one-letter code: Putative pre-16S rRNA nuclease (130 aa).

It belongs to the YqgF nuclease family.

The protein localises to the cytoplasm. Its function is as follows. Could be a nuclease involved in processing of the 5'-end of pre-16S rRNA. The sequence is that of Putative pre-16S rRNA nuclease from Sulfurimonas denitrificans (strain ATCC 33889 / DSM 1251) (Thiomicrospira denitrificans (strain ATCC 33889 / DSM 1251)).